The primary structure comprises 333 residues: Mitochondrial 2-oxoglutarate/malate carrier protein (333 aa).

Solcar repeat units lie at residues Phe29 to Arg127, Pro136 to Phe227, and Asp236 to Ala325. 6 consecutive transmembrane segments (helical) span residues Arg30–Leu61, Gly102–Ile120, Phe138–Ala159, Gly202–Tyr221, His241–Val259, and Gly300–Leu319.

It belongs to the mitochondrial carrier (TC 2.A.29) family. Interacts with SMIM26.

Its subcellular location is the membrane. It carries out the reaction (S)-malate(in) + 2-oxoglutarate(out) = (S)-malate(out) + 2-oxoglutarate(in). It catalyses the reaction malonate(in) + 2-oxoglutarate(out) = malonate(out) + 2-oxoglutarate(in). The enzyme catalyses succinate(in) + 2-oxoglutarate(out) = succinate(out) + 2-oxoglutarate(in). The catalysed reaction is maleate(in) + 2-oxoglutarate(out) = maleate(out) + 2-oxoglutarate(in). It carries out the reaction oxaloacetate(in) + 2-oxoglutarate(out) = oxaloacetate(out) + 2-oxoglutarate(in). Functionally, catalyzes the transport of 2-oxoglutarate (alpha-oxoglutarate) across the inner mitochondrial membrane in an electroneutral exchange for malate. Can also exchange 2-oxoglutarate for other dicarboxylic acids such as malonate, succinate, maleate and oxaloacetate, although with lower affinity. Contributes to several metabolic processes, including the malate-aspartate shuttle, the oxoglutarate/isocitrate shuttle, in gluconeogenesis from lactate, and in nitrogen metabolism. Maintains mitochondrial fusion and fission events, and the organization and morphology of cristae. Involved in the regulation of apoptosis. Helps protect from cytotoxic-induced apoptosis by modulating glutathione levels in mitochondria. This is Mitochondrial 2-oxoglutarate/malate carrier protein (SLC25A11) from Sus scrofa (Pig).